We begin with the raw amino-acid sequence, 306 residues long: Armadillo repeat-containing protein 10 (306 aa).

Residues valine 7–arginine 29 traverse the membrane as a helical segment. Position 43 is a phosphoserine (serine 43). Threonine 48 carries the phosphothreonine modification. The ARM repeat unit spans residues glycine 101–proline 143.

In terms of assembly, interacts with the DNA-binding domain of p53/TP53.

It localises to the endoplasmic reticulum membrane. The protein localises to the mitochondrion outer membrane. Its function is as follows. May play a role in cell survival and cell growth. May suppress the transcriptional activity of p53/TP53. The chain is Armadillo repeat-containing protein 10 (Armc10) from Mus musculus (Mouse).